A 319-amino-acid chain; its full sequence is Putative olfactory receptor 52L2 (319 aa).

Residues 1-43 are Extracellular-facing; it reads MNLDSFFSFLLKSLIMALSNSSWRLPQPSFFLVGIPGLEESQH. An N-linked (GlcNAc...) asparagine glycan is attached at Asn-20. The chain crosses the membrane as a helical span at residues 44–64; it reads WIALPLGILYLLALVGNVTIL. The Cytoplasmic segment spans residues 65–72; the sequence is FIIWMDPS. Residues 73-93 form a helical membrane-spanning segment; the sequence is LHQSMYLFLSMLAAIDLVVAS. The Extracellular portion of the chain corresponds to 94–117; it reads STAPKALAVLLVRAQEIGYTVCLI. Residues Cys-115 and Cys-207 are joined by a disulfide bond. The chain crosses the membrane as a helical span at residues 118–138; the sequence is QMFFTHAFSSMESGVLVAMAL. Over 139–157 the chain is Cytoplasmic; it reads DRYVAICHPLHHSTILHPG. The helical transmembrane segment at 158-178 threads the bilayer; sequence VIGHIGMVVLVRGLLLLIPFL. Over 179-214 the chain is Extracellular; that stretch reads ILLRKLIFCQATIIGHAYCEHMAVVKLACSETTVNR. A helical transmembrane segment spans residues 215–235; the sequence is AYGLTVALLVVGLDVLAIGVS. The Cytoplasmic portion of the chain corresponds to 236–255; it reads YAHILQAVLKVPGNEARLKA. The helical transmembrane segment at 256–276 threads the bilayer; the sequence is FSTCGSHVCVILVFYIPGMFS. At 277 to 291 the chain is on the extracellular side; it reads FLTHRFGHHVPHHVH. Residues 292 to 312 form a helical membrane-spanning segment; the sequence is VLLAILYRLVPPALNPLVYRV. Residues 313 to 319 are Cytoplasmic-facing; sequence KTQKIHQ.

Belongs to the G-protein coupled receptor 1 family.

It is found in the cell membrane. Its function is as follows. Odorant receptor. The polypeptide is Putative olfactory receptor 52L2 (OR52L2P) (Homo sapiens (Human)).